Reading from the N-terminus, the 182-residue chain is Adenine phosphoribosyltransferase (182 aa).

The protein belongs to the purine/pyrimidine phosphoribosyltransferase family. Homodimer.

The protein localises to the cytoplasm. The enzyme catalyses AMP + diphosphate = 5-phospho-alpha-D-ribose 1-diphosphate + adenine. It functions in the pathway purine metabolism; AMP biosynthesis via salvage pathway; AMP from adenine: step 1/1. In terms of biological role, catalyzes a salvage reaction resulting in the formation of AMP, that is energically less costly than de novo synthesis. The chain is Adenine phosphoribosyltransferase from Renibacterium salmoninarum (strain ATCC 33209 / DSM 20767 / JCM 11484 / NBRC 15589 / NCIMB 2235).